Here is a 560-residue protein sequence, read N- to C-terminus: MSIGDVCSARFIFVTGGVVSSLGKGLAAASIGALLQARGFRVRLRKLDPYLNVDPGTMSPAQHGEVFVTDDGGETDLDLGNYERFTGVNTTKEDNITAGRIYQQLLAKERRGDYLGHTVQVIPHVTDLIISFILSNDDGADFIICEIGGTVGDIESQPFLESIRQVSYRLSKNFTIFVHLTLVPCVGSAGELKTKPTQHSVKELSSLGIQPDIILYRSAEPLPQYQSAKIANFCNVSADNVIPALDVESMYKLPVMYHAHKLDTQILSHFGMGAPEPDLTKWANVLTMVNNARNVVTIAIIGKYTKFLDAYTSLTEALDHAGMHSGIKIQVKWVDSRLPVRESDLHDVDGVLIPGGFGDDGVDGKVLAIGYARANGIPMLGICMGMQLAAIEFALNVAKLEDANSTEFNQACKNPIVVELPWLQKGEGEYLLGGSMRLGSCTYRLSADSRVASVYGSTVINERCRHRYCINPQYKNVLEEHGLSFTGMSDSHGLVEVLELQSHPWFIGVQFHPEFKSSPFAPHPLFTSFVQNVLQIKQRGFMHKSVSAAAILVPGSSVVS.

The tract at residues 1–272 (MSIGDVCSAR…DTQILSHFGM (272 aa)) is amidoligase domain. S20 is a CTP binding site. S20 contacts UTP. Residues 21 to 26 (SLGKGL) and D78 each bind ATP. Positions 78 and 146 each coordinate Mg(2+). Residues 153–155 (DIE), 193–198 (KTKPTQ), and K229 contribute to the CTP site. Residues 193-198 (KTKPTQ) and K229 each bind UTP. Positions 297–539 (TIAIIGKYTK…VQNVLQIKQR (243 aa)) constitute a Glutamine amidotransferase type-1 domain. Residue G356 participates in L-glutamine binding. C383 serves as the catalytic Nucleophile; for glutamine hydrolysis. Residues 384–387 (MGMQ), E407, and R467 contribute to the L-glutamine site. Catalysis depends on residues H512 and E514.

It belongs to the CTP synthase family. Homotetramer.

The enzyme catalyses UTP + L-glutamine + ATP + H2O = CTP + L-glutamate + ADP + phosphate + 2 H(+). The catalysed reaction is L-glutamine + H2O = L-glutamate + NH4(+). It catalyses the reaction UTP + NH4(+) + ATP = CTP + ADP + phosphate + 2 H(+). Its pathway is pyrimidine metabolism; CTP biosynthesis via de novo pathway; CTP from UDP: step 2/2. Allosterically activated by GTP, when glutamine is the substrate; GTP has no effect on the reaction when ammonia is the substrate. The allosteric effector GTP functions by stabilizing the protein conformation that binds the tetrahedral intermediate(s) formed during glutamine hydrolysis. Inhibited by the product CTP, via allosteric rather than competitive inhibition. Its function is as follows. Catalyzes the ATP-dependent amination of UTP to CTP with either L-glutamine or ammonia as the source of nitrogen. Regulates intracellular CTP levels through interactions with the four ribonucleotide triphosphates. This chain is CTP synthase, found in Anaplasma marginale (strain Florida).